We begin with the raw amino-acid sequence, 576 residues long: Sulfite reductase [NADPH] hemoprotein beta-component (576 aa).

The [4Fe-4S] cluster site is built by Cys435, Cys441, Cys480, and Cys484. Cys484 contributes to the siroheme binding site.

The protein belongs to the nitrite and sulfite reductase 4Fe-4S domain family. Alpha(8)-beta(8). The alpha component is a flavoprotein, the beta component is a hemoprotein. The cofactor is siroheme. [4Fe-4S] cluster is required as a cofactor.

It carries out the reaction hydrogen sulfide + 3 NADP(+) + 3 H2O = sulfite + 3 NADPH + 4 H(+). The protein operates within sulfur metabolism; hydrogen sulfide biosynthesis; hydrogen sulfide from sulfite (NADPH route): step 1/1. Its function is as follows. Component of the sulfite reductase complex that catalyzes the 6-electron reduction of sulfite to sulfide. This is one of several activities required for the biosynthesis of L-cysteine from sulfate. This chain is Sulfite reductase [NADPH] hemoprotein beta-component, found in Proteus mirabilis (strain HI4320).